The sequence spans 602 residues: Arp2/3 complex-activating protein rickA (602 aa).

3 disordered regions span residues 307–484 (SSLA…AGPK), 516–535 (VEFDPNTGKPVAHSHSKPVQ), and 555–602 (MSDS…SFVK). Residues 318–442 (TPPPPLPGNN…IPPPPPPPMA (125 aa)) show a composition bias toward pro residues. 2 consecutive WH2 domains span residues 472–489 (DTSDLMREIAGPKKLRKV) and 499–516 (SRDLLLQSIRGEHKLKKV). Residues 475–484 (DLMREIAGPK) are compositionally biased toward basic and acidic residues. A central and acidic domains region spans residues 537–570 (VNKLSGVASILARRVVMEMSDSSGSESDSGNWSD). A compositionally biased stretch (low complexity) spans 555–566 (MSDSSGSESDSG). The segment covering 578-590 (KTLKTKRERRKIL) has biased composition (basic residues). Polar residues predominate over residues 591–602 (NNRNSQKPSFVK).

In terms of assembly, homodimer.

The protein resides in the cell surface. Its function is as follows. Recruits and activates the Arp2/3 complex, which in turn leads to actin polymerization, promoting Rickettsia motility during infection. The chain is Arp2/3 complex-activating protein rickA (rickA) from Rickettsia montanensis.